The primary structure comprises 220 residues: Iron-sulfur cluster repair protein YtfE (220 aa).

The protein belongs to the RIC family. YtfE subfamily. As to quaternary structure, homodimer.

It localises to the cytoplasm. In terms of biological role, di-iron-containing protein involved in the repair of iron-sulfur clusters damaged by oxidative and nitrosative stress conditions. The polypeptide is Iron-sulfur cluster repair protein YtfE (Salmonella schwarzengrund (strain CVM19633)).